Reading from the N-terminus, the 79-residue chain is Cytochrome c oxidase subunit 7A1, mitochondrial (79 aa).

Residues Met1–Arg21 constitute a mitochondrion transit peptide. Over Phe22 to Gly46 the chain is Mitochondrial matrix. A helical transmembrane segment spans residues Ile47–Ser75. Over Phe76–Asn79 the chain is Mitochondrial intermembrane.

Belongs to the cytochrome c oxidase VIIa family. In terms of assembly, component of the complex IV (CIV, cytochrome c oxidase), a multisubunit enzyme composed of 14 subunits. The complex is composed of a catalytic core of 3 subunits MT-CO1, MT-CO2 and MT-CO3, encoded in the mitochondrial DNA, and 11 supernumerary subunits COX4I1 (or COX4I2), COX5A, COX5B, COX6A2 (or COX6A1), COX6B1 (or COX6B2), COX6C, COX7A1 (or COX7A2), COX7B, COX7C, COX8B and NDUFA4, which are encoded in the nuclear genome. The complex exists as a monomer or a dimer and forms supercomplexes (SCs) in the inner mitochondrial membrane with NADH-ubiquinone oxidoreductase (complex I, CI) and ubiquinol-cytochrome c oxidoreductase (cytochrome b-c1 complex, complex III, CIII), resulting in different assemblies (supercomplex SCI(1)III(2)IV(1) and megacomplex MCI(2)III(2)IV(2)).

It localises to the mitochondrion inner membrane. Its pathway is energy metabolism; oxidative phosphorylation. Its function is as follows. Component of the mitochondrial respiratory complex IV (CIV, also named cytochrome c oxidase complex), the last enzyme in the mitochondrial electron transport chain which drives oxidative phosphorylation. The CIV complex is the component of the respiratory chain that catalyzes the reduction of oxygen to water. Acts as an assembly factor that specifically drives the homodimerization of CIV complexes, mediating the formation of mitochondrial respiratory supercomplexes (respirasomes) containing two CIV: supercomplxes with two molecules of CIV show improved activity. Despite being highly expressed in brown adipose tissue, not required for thermogenesis. This Trachypithecus cristatus (Silvered leaf-monkey) protein is Cytochrome c oxidase subunit 7A1, mitochondrial (COX7A1).